The primary structure comprises 788 residues: Calpastatin (788 aa).

Over residues 1–11 the composition is skewed to pro residues; it reads MSQPGPKPAAS. 3 disordered regions span residues 1-262, 289-493, and 514-580; these read MSQP…TGPV, LLEK…MCSI, and TLAG…SQEQ. Serine 11 carries the phosphoserine modification. A compositionally biased stretch (low complexity) spans 12-21; that stretch reads PRPSRGAAAR. A compositionally biased stretch (basic and acidic residues) spans 38-49; sequence PGEKKGSDEKKA. Over residues 65–87 the composition is skewed to low complexity; that stretch reads AATATKVTASSAATSKSPSMSTT. Positions 99–119 are enriched in basic and acidic residues; that stretch reads EGPDQKRPREQAVKTESKKPQ. Lysine 112 is covalently cross-linked (Glycyl lysine isopeptide (Lys-Gly) (interchain with G-Cter in SUMO2)). Lysine 129 carries the post-translational modification N6-acetyllysine. Serine 165 is modified (phosphoserine). Threonine 216 carries the phosphothreonine modification. Serine 219 bears the Phosphoserine mark. Basic and acidic residues predominate over residues 246-256; sequence GGHEDTNRDDP. An Inhibitory domain 1 repeat occupies 251 to 303; it reads TNRDDPPYTGPVVLDPMYSTYLEALGIKEGTIPPEYRKLLEKNEGITQPLPDS. A phosphoserine mark is found at serine 303 and serine 324. 2 stretches are compositionally biased toward polar residues: residues 318–328 and 369–380; these read SDFTCSSPTGK and QALQALSDSLGT. Residues 384–436 form an Inhibitory domain 2 repeat; the sequence is DPPSHVSQAEQVKEAKAKEERQEKCGEDEDTVPAEYRLKPAKDKDGKPLLPEP. Basic and acidic residues-rich tracts occupy residues 394–408 and 419–430; these read QVKE…QEKC and YRLKPAKDKDGK. Over residues 441 to 453 the composition is skewed to low complexity; it reads KSLSESELIGELS. A phosphoserine mark is found at serine 444, serine 446, and serine 453. At threonine 479 the chain carries Phosphothreonine. The residue at position 518 (serine 518) is a Phosphoserine. Over residues 522-570 the composition is skewed to basic and acidic residues; the sequence is READPEHEKTVEDKVKEKAKEEEHEKLGEKEETVPPDYRLEEVKDKDGK. The stretch at 524-577 is one Inhibitory domain 3 repeat; that stretch reads ADPEHEKTVEDKVKEKAKEEEHEKLGEKEETVPPDYRLEEVKDKDGKPLLPKES. A phosphoserine mark is found at serine 594, serine 605, serine 653, and serine 655. Residues 620-788 are disordered; that stretch reads VVSQTPAPST…PKAKEDARHS (169 aa). An Inhibitory domain 4 repeat occupies 661–714; the sequence is PDPDENKPLDDKVKEKIKPEHSEKLGERDDTIPPEYRHLLDNDGKDKPEKPPTK. Basic and acidic residues-rich tracts occupy residues 661–726 and 759–788; these read PDPD…RDPI and ASKD…ARHS.

Belongs to the protease inhibitor I27 (calpastatin) family. In terms of tissue distribution, isoform 2 is the major form in all tissues examined. Isoform 1 accounts for 5-10% in tissues such as skeletal muscle, liver and brain, and 30% in myoblasts. Isoforms 4 and 5 are testis-specific. Isoform 6 is highly expressed in heart and skeletal muscle with lower levels in liver, brain and testis. Isoform 7 is expressed at high levels in liver.

In terms of biological role, specific inhibition of calpain (calcium-dependent cysteine protease). Plays a key role in postmortem tenderization of meat and have been proposed to be involved in muscle protein degradation in living tissue. The polypeptide is Calpastatin (Cast) (Mus musculus (Mouse)).